A 256-amino-acid chain; its full sequence is Putative transposase for insertion sequence element IS112 (256 aa).

It belongs to the transposase 11 family.

In terms of biological role, involved in the transposition of the insertion sequence IS112 which inactivates the SalI restriction-modification system. The polypeptide is Putative transposase for insertion sequence element IS112 (Streptomyces albus G).